Here is a 440-residue protein sequence, read N- to C-terminus: Phosphatidylcholine-sterol acyltransferase (440 aa).

An N-terminal signal peptide occupies residues 1–24 (MGPPGSPWQWVPLLLGLLLPPAAP). The N-linked (GlcNAc...) asparagine glycan is linked to Asn-44. Residues Cys-74 and Cys-98 are joined by a disulfide bond. N-linked (GlcNAc...) asparagine glycosylation is present at Asn-108. Catalysis depends on Ser-205, which acts as the Nucleophile. Residue Asn-296 is glycosylated (N-linked (GlcNAc...) asparagine). Cys-337 and Cys-380 are disulfide-bonded. Active-site charge relay system residues include Asp-369 and His-401. Residue Asn-408 is glycosylated (N-linked (GlcNAc...) asparagine).

It belongs to the AB hydrolase superfamily. Lipase family. In terms of tissue distribution, most abundant in liver and cerebellum.

The protein resides in the secreted. It carries out the reaction a sterol + a 1,2-diacyl-sn-glycero-3-phosphocholine = a sterol ester + a 1-acyl-sn-glycero-3-phosphocholine. Its activity is regulated as follows. APOA1 is the most potent activator in plasma. Also activated by APOE, APOC1 and APOA4. Its function is as follows. Central enzyme in the extracellular metabolism of plasma lipoproteins. Synthesized mainly in the liver and secreted into plasma where it converts cholesterol and phosphatidylcholines (lecithins) to cholesteryl esters and lysophosphatidylcholines on the surface of high and low density lipoproteins (HDLs and LDLs). The cholesterol ester is then transported back to the liver. Has a preference for plasma 16:0-18:2 or 18:O-18:2 phosphatidylcholines. Also produced in the brain by primary astrocytes, and esterifies free cholesterol on nascent APOE-containing lipoproteins secreted from glia and influences cerebral spinal fluid (CSF) APOE- and APOA1 levels. Together with APOE and the cholesterol transporter ABCA1, plays a key role in the maturation of glial-derived, nascent lipoproteins. Required for remodeling high-density lipoprotein particles into their spherical forms. The polypeptide is Phosphatidylcholine-sterol acyltransferase (LCAT) (Papio anubis (Olive baboon)).